We begin with the raw amino-acid sequence, 517 residues long: Maturase K (517 aa).

Belongs to the intron maturase 2 family. MatK subfamily.

The protein localises to the plastid. The protein resides in the chloroplast. In terms of biological role, usually encoded in the trnK tRNA gene intron. Probably assists in splicing its own and other chloroplast group II introns. The chain is Maturase K from Acer pseudoplatanus (Sycamore maple).